The following is a 60-amino-acid chain: Large ribosomal subunit protein bL32 (60 aa).

The protein belongs to the bacterial ribosomal protein bL32 family.

This Hydrogenobaculum sp. (strain Y04AAS1) protein is Large ribosomal subunit protein bL32.